The following is a 254-amino-acid chain: Pyridoxine 5'-phosphate synthase (254 aa).

Asparagine 12 provides a ligand contact to 3-amino-2-oxopropyl phosphate. Residue 14–15 (DH) participates in 1-deoxy-D-xylulose 5-phosphate binding. Arginine 23 contacts 3-amino-2-oxopropyl phosphate. Histidine 48 acts as the Proton acceptor in catalysis. Arginine 50 and histidine 55 together coordinate 1-deoxy-D-xylulose 5-phosphate. The Proton acceptor role is filled by glutamate 75. Threonine 105 contacts 1-deoxy-D-xylulose 5-phosphate. Histidine 199 acts as the Proton donor in catalysis. 3-amino-2-oxopropyl phosphate is bound by residues glycine 200 and 221–222 (GF).

It belongs to the PNP synthase family. As to quaternary structure, homooctamer; tetramer of dimers.

The protein localises to the cytoplasm. The enzyme catalyses 3-amino-2-oxopropyl phosphate + 1-deoxy-D-xylulose 5-phosphate = pyridoxine 5'-phosphate + phosphate + 2 H2O + H(+). It participates in cofactor biosynthesis; pyridoxine 5'-phosphate biosynthesis; pyridoxine 5'-phosphate from D-erythrose 4-phosphate: step 5/5. Catalyzes the complicated ring closure reaction between the two acyclic compounds 1-deoxy-D-xylulose-5-phosphate (DXP) and 3-amino-2-oxopropyl phosphate (1-amino-acetone-3-phosphate or AAP) to form pyridoxine 5'-phosphate (PNP) and inorganic phosphate. In Rhodopseudomonas palustris (strain TIE-1), this protein is Pyridoxine 5'-phosphate synthase.